We begin with the raw amino-acid sequence, 475 residues long: Bifunctional protein HldE (475 aa).

Residues 1–318 (MMQYSPKFNN…ENAIHHREET (318 aa)) form a ribokinase region. 195 to 198 (NMSE) contacts ATP. Asp264 is a catalytic residue. Residues 344–475 (MTNGCFDILH…NVIKKIQASK (132 aa)) are cytidylyltransferase.

This sequence in the N-terminal section; belongs to the carbohydrate kinase PfkB family. In the C-terminal section; belongs to the cytidylyltransferase family. In terms of assembly, homodimer.

The catalysed reaction is D-glycero-beta-D-manno-heptose 7-phosphate + ATP = D-glycero-beta-D-manno-heptose 1,7-bisphosphate + ADP + H(+). The enzyme catalyses D-glycero-beta-D-manno-heptose 1-phosphate + ATP + H(+) = ADP-D-glycero-beta-D-manno-heptose + diphosphate. It participates in nucleotide-sugar biosynthesis; ADP-L-glycero-beta-D-manno-heptose biosynthesis; ADP-L-glycero-beta-D-manno-heptose from D-glycero-beta-D-manno-heptose 7-phosphate: step 1/4. It functions in the pathway nucleotide-sugar biosynthesis; ADP-L-glycero-beta-D-manno-heptose biosynthesis; ADP-L-glycero-beta-D-manno-heptose from D-glycero-beta-D-manno-heptose 7-phosphate: step 3/4. Its function is as follows. Catalyzes the phosphorylation of D-glycero-D-manno-heptose 7-phosphate at the C-1 position to selectively form D-glycero-beta-D-manno-heptose-1,7-bisphosphate. Functionally, catalyzes the ADP transfer from ATP to D-glycero-beta-D-manno-heptose 1-phosphate, yielding ADP-D-glycero-beta-D-manno-heptose. The sequence is that of Bifunctional protein HldE from Actinobacillus pleuropneumoniae serotype 5b (strain L20).